A 391-amino-acid chain; its full sequence is Argininosuccinate synthase (391 aa).

6 to 14 is an ATP binding site; sequence AYSGGLDTT. Y84 provides a ligand contact to L-citrulline. G114 contacts ATP. L-aspartate-binding residues include T116, N120, and D121. An L-citrulline-binding site is contributed by N120. Positions 124, 171, 180, 253, and 265 each coordinate L-citrulline.

It belongs to the argininosuccinate synthase family. Type 1 subfamily. In terms of assembly, homotetramer.

Its subcellular location is the cytoplasm. It catalyses the reaction L-citrulline + L-aspartate + ATP = 2-(N(omega)-L-arginino)succinate + AMP + diphosphate + H(+). Its pathway is amino-acid biosynthesis; L-arginine biosynthesis; L-arginine from L-ornithine and carbamoyl phosphate: step 2/3. This chain is Argininosuccinate synthase, found in Sulfolobus acidocaldarius (strain ATCC 33909 / DSM 639 / JCM 8929 / NBRC 15157 / NCIMB 11770).